The following is a 74-amino-acid chain: ATP synthase subunit c (74 aa).

The next 2 helical transmembrane spans lie at 9-29 (IAIA…ASIF) and 51-71 (LIGA…AILL).

It belongs to the ATPase C chain family. F-type ATPases have 2 components, F(1) - the catalytic core - and F(0) - the membrane proton channel. F(1) has five subunits: alpha(3), beta(3), gamma(1), delta(1), epsilon(1). F(0) has three main subunits: a(1), b(2) and c(10-14). The alpha and beta chains form an alternating ring which encloses part of the gamma chain. F(1) is attached to F(0) by a central stalk formed by the gamma and epsilon chains, while a peripheral stalk is formed by the delta and b chains.

Its subcellular location is the cell inner membrane. Functionally, f(1)F(0) ATP synthase produces ATP from ADP in the presence of a proton or sodium gradient. F-type ATPases consist of two structural domains, F(1) containing the extramembraneous catalytic core and F(0) containing the membrane proton channel, linked together by a central stalk and a peripheral stalk. During catalysis, ATP synthesis in the catalytic domain of F(1) is coupled via a rotary mechanism of the central stalk subunits to proton translocation. Its function is as follows. Key component of the F(0) channel; it plays a direct role in translocation across the membrane. A homomeric c-ring of between 10-14 subunits forms the central stalk rotor element with the F(1) delta and epsilon subunits. The chain is ATP synthase subunit c from Orientia tsutsugamushi (strain Ikeda) (Rickettsia tsutsugamushi).